The following is a 290-amino-acid chain: Ribosomal RNA small subunit methyltransferase A (290 aa).

N27, L29, G54, E75, D100, and N125 together coordinate S-adenosyl-L-methionine.

This sequence belongs to the class I-like SAM-binding methyltransferase superfamily. rRNA adenine N(6)-methyltransferase family. RsmA subfamily.

Its subcellular location is the cytoplasm. It carries out the reaction adenosine(1518)/adenosine(1519) in 16S rRNA + 4 S-adenosyl-L-methionine = N(6)-dimethyladenosine(1518)/N(6)-dimethyladenosine(1519) in 16S rRNA + 4 S-adenosyl-L-homocysteine + 4 H(+). Its function is as follows. Specifically dimethylates two adjacent adenosines (A1518 and A1519) in the loop of a conserved hairpin near the 3'-end of 16S rRNA in the 30S particle. May play a critical role in biogenesis of 30S subunits. This is Ribosomal RNA small subunit methyltransferase A from Streptococcus pneumoniae (strain 70585).